Here is a 123-residue protein sequence, read N- to C-terminus: MRGTAGVPDQPVPTPTPSVPTSSSPVPKPPTQGNKKWCVPKAEATDAQLQSNIDYVCSQSGMDCGPIQANGACFNPNTVRAHASYAMNSWYQSKGRNDFDCDFSGTGAITSSDPSNGSCSFLS.

The signal sequence occupies residues 1–21; that stretch reads MRGTAGVPDQPVPTPTPSVPT. The interval 1 to 37 is disordered; sequence MRGTAGVPDQPVPTPTPSVPTSSSPVPKPPTQGNKKW. Cysteine 38 and cysteine 101 are oxidised to a cystine.

In terms of processing, the N-terminus is blocked. Phosphorylated at Ser-24 when expressed as a recombinant protein in a heterologous system. Post-translationally, not glycosylated. In terms of processing, contains two additional disulfide bonds. In terms of tissue distribution, expressed in mature and germinating pollen.

It is found in the cytoplasmic vesicle. In terms of biological role, carbohydrate-binding protein binding preferentially 1,3-beta-glucans. May be involved in pollen tube wall re-formation during germination. This Olea europaea (Common olive) protein is Major pollen allergen Ole e 10.